A 122-amino-acid chain; its full sequence is Small ribosomal subunit protein uS13 (122 aa).

The disordered stretch occupies residues P97–K122.

It belongs to the universal ribosomal protein uS13 family. As to quaternary structure, part of the 30S ribosomal subunit. Forms a loose heterodimer with protein S19. Forms two bridges to the 50S subunit in the 70S ribosome.

In terms of biological role, located at the top of the head of the 30S subunit, it contacts several helices of the 16S rRNA. In the 70S ribosome it contacts the 23S rRNA (bridge B1a) and protein L5 of the 50S subunit (bridge B1b), connecting the 2 subunits; these bridges are implicated in subunit movement. Contacts the tRNAs in the A and P-sites. The protein is Small ribosomal subunit protein uS13 of Pelobacter propionicus (strain DSM 2379 / NBRC 103807 / OttBd1).